The following is a 1296-amino-acid chain: Protein STU1 (1296 aa).

Disordered stretches follow at residues 258-287 (ATSAPVLSPPAPTTFAPTTRSQFNSSHGAD), 735-793 (LSQT…PPVT), 888-946 (ALQQ…HISA), and 953-972 (TTSHRVLSSTPSRRAPTNGV). Over residues 277 to 287 (RSQFNSSHGAD) the composition is skewed to polar residues. 3 stretches are compositionally biased toward low complexity: residues 755–782 (SARSRAISSSSYSSQGSSSSARMQGAAS), 900–919 (TISTSSTSSTNSSTTPASAS), and 933–946 (HSPSPSASASHISA). Residues 953–964 (TTSHRVLSSTPS) are compositionally biased toward polar residues.

Belongs to the CLASP family. Interacts with microtubules.

It localises to the cytoplasm. Its subcellular location is the cytoskeleton. The protein resides in the nucleus. The protein localises to the spindle. In terms of biological role, microtubule binding protein that promotes the stabilization of dynamic microtubules. Required for mitotic spindle formation. The chain is Protein STU1 (STU1) from Mycosarcoma maydis (Corn smut fungus).